Reading from the N-terminus, the 110-residue chain is Cytochrome bo(3) ubiquinol oxidase subunit 4 (110 aa).

Topologically, residues 1 to 18 (MANAHDTHHEGNHGSVKS) are cytoplasmic. Residues 19–39 (YMIGFILSIILTAIPFGLAMS) traverse the membrane as a helical segment. Over 40 to 46 (PSLPKNL) the chain is Periplasmic. Residues 47–67 (TVLIIVAMAVIQVVVHLVYFL) form a helical membrane-spanning segment. Residues 68–78 (HMDRSKEQRNN) lie on the Cytoplasmic side of the membrane. The helical transmembrane segment at 79–99 (VWTFLFTTLVIALLVGLSLWI) threads the bilayer. Over 100–110 (MFSIHFEMLAK) the chain is Periplasmic.

This sequence belongs to the cytochrome c oxidase bacterial subunit 4 family. As to quaternary structure, heterooctamer of two A chains, two B chains, two C chains and two D chains.

The protein localises to the cell inner membrane. Cytochrome bo(3) ubiquinol terminal oxidase is the component of the aerobic respiratory chain of E.coli that predominates when cells are grown at high aeration. Has proton pump activity across the membrane in addition to electron transfer, pumping 2 protons/electron. The protein is Cytochrome bo(3) ubiquinol oxidase subunit 4 (cyoD) of Pseudomonas putida (Arthrobacter siderocapsulatus).